The following is a 540-amino-acid chain: Cytochrome P450 27C1 (540 aa).

Cys-486 is a binding site for heme.

It belongs to the cytochrome P450 family. Heme serves as cofactor. In terms of tissue distribution, following L-thyroxine, expressed in the retinal pigment epithelium (at protein level).

Its subcellular location is the membrane. The enzyme catalyses all-trans-retinol + 2 reduced [adrenodoxin] + O2 + 2 H(+) = all-trans-3,4-didehydroretinol + 2 oxidized [adrenodoxin] + 2 H2O. In terms of biological role, efficiently catalyzes the conversion of all-trans retinol (also called vitamin A1, the precursor of 11-cis retinal) to 3,4-didehydroretinol (also called vitamin A2, the precursor of 11-cis 3,4-didehydroretinal). Also acts on all-trans retinal and all-trans retinoic acid. The replacement of 11-cis retinal chromophore in photopigments with 11-cis 3,4-didehydroretinal enhances sensitivity to long-wavelength light. This may improve vision in fresh water which is often turbid. This is Cytochrome P450 27C1 (cyp27c1) from Danio rerio (Zebrafish).